A 211-amino-acid chain; its full sequence is 3-demethoxyubiquinol 3-hydroxylase (211 aa).

Residues E60, E90, H93, E142, E174, and H177 each coordinate Fe cation.

This sequence belongs to the COQ7 family. The cofactor is Fe cation.

It is found in the cell membrane. The enzyme catalyses a 5-methoxy-2-methyl-3-(all-trans-polyprenyl)benzene-1,4-diol + AH2 + O2 = a 3-demethylubiquinol + A + H2O. The protein operates within cofactor biosynthesis; ubiquinone biosynthesis. Its function is as follows. Catalyzes the hydroxylation of 2-nonaprenyl-3-methyl-6-methoxy-1,4-benzoquinol during ubiquinone biosynthesis. This chain is 3-demethoxyubiquinol 3-hydroxylase, found in Acinetobacter baumannii (strain AB307-0294).